The following is a 568-amino-acid chain: Nitrite reductase (568 aa).

The first 25 residues, Met-1–Ala-25, serve as a signal peptide directing secretion. An N-terminal tail region spans residues Lys-26–Pro-54. Residues Asp-55–Gln-140 form the Cytochrome c domain. The heme c site is built by Cys-72, Cys-75, His-76, Arg-96, Thr-109, and Met-113. The D1-heme domain stretch occupies residues Pro-141–Tyr-568. Residues His-207, Arg-250, Ser-251, Tyr-270, Arg-397, and Gln-508 each contribute to the heme d1 site.

As to quaternary structure, homodimer. Heme c is required as a cofactor. It depends on heme as a cofactor.

It is found in the periplasm. It carries out the reaction nitric oxide + Fe(III)-[cytochrome c] + H2O = Fe(II)-[cytochrome c] + nitrite + 2 H(+). The enzyme catalyses A + NH4(+) + H2O = hydroxylamine + AH2 + H(+). The polypeptide is Nitrite reductase (nirS) (Pseudomonas aeruginosa (strain ATCC 15692 / DSM 22644 / CIP 104116 / JCM 14847 / LMG 12228 / 1C / PRS 101 / PAO1)).